The sequence spans 164 residues: S-ribosylhomocysteine lyase (164 aa).

The Fe cation site is built by His-54, His-58, and Cys-128.

It belongs to the LuxS family. In terms of assembly, homodimer. Fe cation is required as a cofactor.

It catalyses the reaction S-(5-deoxy-D-ribos-5-yl)-L-homocysteine = (S)-4,5-dihydroxypentane-2,3-dione + L-homocysteine. Functionally, involved in the synthesis of autoinducer 2 (AI-2) which is secreted by bacteria and is used to communicate both the cell density and the metabolic potential of the environment. The regulation of gene expression in response to changes in cell density is called quorum sensing. Catalyzes the transformation of S-ribosylhomocysteine (RHC) to homocysteine (HC) and 4,5-dihydroxy-2,3-pentadione (DPD). In Campylobacter jejuni subsp. doylei (strain ATCC BAA-1458 / RM4099 / 269.97), this protein is S-ribosylhomocysteine lyase.